Here is a 351-residue protein sequence, read N- to C-terminus: UDP-3-O-acylglucosamine N-acyltransferase (351 aa).

The Proton acceptor role is filled by His240.

This sequence belongs to the transferase hexapeptide repeat family. LpxD subfamily. Homotrimer.

It catalyses the reaction a UDP-3-O-[(3R)-3-hydroxyacyl]-alpha-D-glucosamine + a (3R)-hydroxyacyl-[ACP] = a UDP-2-N,3-O-bis[(3R)-3-hydroxyacyl]-alpha-D-glucosamine + holo-[ACP] + H(+). Its pathway is bacterial outer membrane biogenesis; LPS lipid A biosynthesis. Functionally, catalyzes the N-acylation of UDP-3-O-acylglucosamine using 3-hydroxyacyl-ACP as the acyl donor. Is involved in the biosynthesis of lipid A, a phosphorylated glycolipid that anchors the lipopolysaccharide to the outer membrane of the cell. The polypeptide is UDP-3-O-acylglucosamine N-acyltransferase (Pseudomonas putida (strain ATCC 700007 / DSM 6899 / JCM 31910 / BCRC 17059 / LMG 24140 / F1)).